Reading from the N-terminus, the 80-residue chain is Large ribosomal subunit protein bL31B (80 aa).

This sequence belongs to the bacterial ribosomal protein bL31 family. Type B subfamily. As to quaternary structure, part of the 50S ribosomal subunit.

This chain is Large ribosomal subunit protein bL31B, found in Streptococcus mutans serotype c (strain ATCC 700610 / UA159).